We begin with the raw amino-acid sequence, 170 residues long: Photosystem I assembly protein Ycf3 (170 aa).

TPR repeat units follow at residues 35 to 68, 72 to 105, and 120 to 153; these read AFTYYRDGMLAQSEGNYAEALQNYYEATRLEIDP, SYILYNIGLIHTSNGEHTKALEYYFRALERNPFL, and GEQAILQGDSEIAEAWFDQAAEYWKQAIALTPGN.

Belongs to the Ycf3 family.

Its subcellular location is the plastid. The protein resides in the chloroplast thylakoid membrane. Its function is as follows. Essential for the assembly of the photosystem I (PSI) complex. May act as a chaperone-like factor to guide the assembly of the PSI subunits. The protein is Photosystem I assembly protein Ycf3 of Agrostis stolonifera (Creeping bentgrass).